Reading from the N-terminus, the 126-residue chain is Phosphoribosyl-AMP cyclohydrolase (126 aa).

Asp-73 is a Mg(2+) binding site. Zn(2+) is bound at residue Cys-74. The Mg(2+) site is built by Asp-75 and Asp-77. Residues Cys-91 and Cys-98 each contribute to the Zn(2+) site.

This sequence belongs to the PRA-CH family. In terms of assembly, homodimer. Mg(2+) is required as a cofactor. The cofactor is Zn(2+).

It localises to the cytoplasm. The enzyme catalyses 1-(5-phospho-beta-D-ribosyl)-5'-AMP + H2O = 1-(5-phospho-beta-D-ribosyl)-5-[(5-phospho-beta-D-ribosylamino)methylideneamino]imidazole-4-carboxamide. Its pathway is amino-acid biosynthesis; L-histidine biosynthesis; L-histidine from 5-phospho-alpha-D-ribose 1-diphosphate: step 3/9. Functionally, catalyzes the hydrolysis of the adenine ring of phosphoribosyl-AMP. The sequence is that of Phosphoribosyl-AMP cyclohydrolase from Solibacter usitatus (strain Ellin6076).